The sequence spans 317 residues: Melanocyte-stimulating hormone receptor (317 aa).

At methionine 1–glutamate 37 the chain is on the extracellular side. An N-linked (GlcNAc...) asparagine glycan is attached at asparagine 29. A helical membrane pass occupies residues valine 38 to isoleucine 63. Residues alanine 64–proline 72 lie on the Cytoplasmic side of the membrane. Residues threonine 73 to leucine 93 traverse the membrane as a helical segment. The Extracellular portion of the chain corresponds to glutamate 94–asparagine 118. Residues valine 119 to valine 140 traverse the membrane as a helical segment. Residues aspartate 141–glutamine 163 lie on the Cytoplasmic side of the membrane. A helical transmembrane segment spans residues alanine 164–tyrosine 183. The Extracellular segment spans residues aspartate 184–cysteine 191. The helical transmembrane segment at leucine 192–leucine 211 threads the bilayer. Residues alanine 212–alanine 240 lie on the Cytoplasmic side of the membrane. A helical transmembrane segment spans residues valine 241–leucine 266. Topologically, residues cysteine 267–asparagine 279 are extracellular. Residues phenylalanine 280 to phenylalanine 300 form a helical membrane-spanning segment. Residues arginine 301–tryptophan 317 lie on the Cytoplasmic side of the membrane. Cysteine 315 carries the S-palmitoyl cysteine lipid modification.

This sequence belongs to the G-protein coupled receptor 1 family. As to quaternary structure, interacts with MGRN1, but does not undergo MGRN1-mediated ubiquitination; this interaction competes with GNAS-binding and thus inhibits agonist-induced cAMP production. Interacts with OPN3; the interaction results in a decrease in MC1R-mediated cAMP signaling and ultimately a decrease in melanin production in melanocytes.

The protein localises to the cell membrane. Functionally, receptor for MSH (alpha, beta and gamma) and ACTH. The activity of this receptor is mediated by G proteins which activate adenylate cyclase. Mediates melanogenesis, the production of eumelanin (black/brown) and phaeomelanin (red/yellow), via regulation of cAMP signaling in melanocytes. This is Melanocyte-stimulating hormone receptor (MC1R) from Hylobates muelleri (Mueller's Bornean gibbon).